Consider the following 383-residue polypeptide: L-lactate dehydrogenase (383 aa).

The FMN hydroxy acid dehydrogenase domain occupies 1–380 (MIIASTFDYR…TCESLVNTDA (380 aa)). Tyr-24 serves as a coordination point for substrate. FMN is bound by residues Ser-106 and Gln-127. Tyr-129 contacts substrate. Position 155 (Thr-155) interacts with FMN. Arg-164 lines the substrate pocket. FMN is bound at residue Lys-251. His-275 acts as the Proton acceptor in catalysis. Residue Arg-278 participates in substrate binding. 306–330 (DSGVRSGLDVVRMIAQGADAVMIGR) contacts FMN.

Belongs to the FMN-dependent alpha-hydroxy acid dehydrogenase family. It depends on FMN as a cofactor.

The protein resides in the cell inner membrane. It carries out the reaction (S)-lactate + A = pyruvate + AH2. Its function is as follows. Catalyzes the conversion of L-lactate to pyruvate. Is coupled to the respiratory chain. The sequence is that of L-lactate dehydrogenase from Bartonella tribocorum (strain CIP 105476 / IBS 506).